The following is a 385-amino-acid chain: Acetate kinase (385 aa).

Asn9 provides a ligand contact to Mg(2+). Lys16 contacts ATP. Arg75 contributes to the substrate binding site. The active-site Proton donor/acceptor is Asp132. Residues 192-196 (HLGNG), 266-268 (DFR), and 314-318 (GIGEN) contribute to the ATP site. Glu368 serves as a coordination point for Mg(2+).

Belongs to the acetokinase family. In terms of assembly, homodimer. Requires Mg(2+) as cofactor. The cofactor is Mn(2+).

Its subcellular location is the cytoplasm. It catalyses the reaction acetate + ATP = acetyl phosphate + ADP. It participates in metabolic intermediate biosynthesis; acetyl-CoA biosynthesis; acetyl-CoA from acetate: step 1/2. In terms of biological role, catalyzes the formation of acetyl phosphate from acetate and ATP. Can also catalyze the reverse reaction. This chain is Acetate kinase, found in Mycobacterium bovis (strain ATCC BAA-935 / AF2122/97).